Reading from the N-terminus, the 186-residue chain is UPF0669 protein C6orf120 homolog (186 aa).

The first 19 residues, 1 to 19 (MVPFWAGLLVLSALPQTLG), serve as a signal peptide directing secretion. N-linked (GlcNAc...) asparagine glycosylation is present at Asn-47. The segment at 141 to 165 (KNSYSSDETPGQPRQSQGPEDTEEE) is disordered. The span at 142–159 (NSYSSDETPGQPRQSQGP) shows a compositional bias: polar residues.

Belongs to the UPF0669 family.

Its subcellular location is the secreted. This is UPF0669 protein C6orf120 homolog from Danio rerio (Zebrafish).